Reading from the N-terminus, the 411-residue chain is Dual-specificity RNA methyltransferase RlmN (411 aa).

Glutamate 125 functions as the Proton acceptor in the catalytic mechanism. The region spanning glutamate 131 to leucine 380 is the Radical SAM core domain. Cysteine 138 and cysteine 383 are oxidised to a cystine. [4Fe-4S] cluster is bound by residues cysteine 145, cysteine 149, and cysteine 152. Residues glycine 209 to glutamate 210, serine 241, serine 263 to histidine 265, and asparagine 340 contribute to the S-adenosyl-L-methionine site. The S-methylcysteine intermediate role is filled by cysteine 383.

Belongs to the radical SAM superfamily. RlmN family. It depends on [4Fe-4S] cluster as a cofactor.

It localises to the cytoplasm. The enzyme catalyses adenosine(2503) in 23S rRNA + 2 reduced [2Fe-2S]-[ferredoxin] + 2 S-adenosyl-L-methionine = 2-methyladenosine(2503) in 23S rRNA + 5'-deoxyadenosine + L-methionine + 2 oxidized [2Fe-2S]-[ferredoxin] + S-adenosyl-L-homocysteine. It catalyses the reaction adenosine(37) in tRNA + 2 reduced [2Fe-2S]-[ferredoxin] + 2 S-adenosyl-L-methionine = 2-methyladenosine(37) in tRNA + 5'-deoxyadenosine + L-methionine + 2 oxidized [2Fe-2S]-[ferredoxin] + S-adenosyl-L-homocysteine. Its function is as follows. Specifically methylates position 2 of adenine 2503 in 23S rRNA and position 2 of adenine 37 in tRNAs. m2A2503 modification seems to play a crucial role in the proofreading step occurring at the peptidyl transferase center and thus would serve to optimize ribosomal fidelity. The polypeptide is Dual-specificity RNA methyltransferase RlmN (Brucella anthropi (strain ATCC 49188 / DSM 6882 / CCUG 24695 / JCM 21032 / LMG 3331 / NBRC 15819 / NCTC 12168 / Alc 37) (Ochrobactrum anthropi)).